Here is a 244-residue protein sequence, read N- to C-terminus: MGHKVHPTGIRLGIAKDWNSKWYASKADFAAYLAADLKVREMLRKKLAQAGISKILIERPAKTARVTIHTARPGVVIGKRGEDIEKLRKEVSEMMGVPAHINVTEVRKPELDAQLVAESIAQQLERRIMFRRAMKRSVGNAMRLGALGIKVNVAGRLNGAEIARSEWYREGRVPLHTLRADIDYGFAEASTTYGIIGIKVWIYKGEVFDFSQVGQEKQDDSPRNDRNDRGDRGDRPSRPAREAR.

The 69-residue stretch at 39 to 107 (VREMLRKKLA…PAHINVTEVR (69 aa)) folds into the KH type-2 domain. A disordered region spans residues 213-244 (VGQEKQDDSPRNDRNDRGDRGDRPSRPAREAR). A compositionally biased stretch (basic and acidic residues) spans 216–244 (EKQDDSPRNDRNDRGDRGDRPSRPAREAR).

Belongs to the universal ribosomal protein uS3 family. As to quaternary structure, part of the 30S ribosomal subunit. Forms a tight complex with proteins S10 and S14.

Functionally, binds the lower part of the 30S subunit head. Binds mRNA in the 70S ribosome, positioning it for translation. The sequence is that of Small ribosomal subunit protein uS3 from Xanthomonas campestris pv. campestris (strain 8004).